A 515-amino-acid polypeptide reads, in one-letter code: Histidine ammonia-lyase (515 aa).

Positions 145 to 147 (ASG) form a cross-link, 5-imidazolinone (Ala-Gly). Position 146 is a 2,3-didehydroalanine (Ser) (S146).

Belongs to the PAL/histidase family. Contains an active site 4-methylidene-imidazol-5-one (MIO), which is formed autocatalytically by cyclization and dehydration of residues Ala-Ser-Gly.

The protein localises to the cytoplasm. It carries out the reaction L-histidine = trans-urocanate + NH4(+). It participates in amino-acid degradation; L-histidine degradation into L-glutamate; N-formimidoyl-L-glutamate from L-histidine: step 1/3. This Gluconobacter oxydans (strain 621H) (Gluconobacter suboxydans) protein is Histidine ammonia-lyase.